We begin with the raw amino-acid sequence, 38 residues long: Natriuretic peptide DNP (38 aa).

A disulfide bridge connects residues Cys7 and Cys23. Positions Ser19–Ala38 are disordered.

This sequence belongs to the natriuretic peptide family. Expressed by the venom gland.

It localises to the secreted. Exhibits vasodilator, natriuretic and diuretic properties in animal models and human tissues. Acts by stimulating cGMP via the natriuretic peptide receptor 1 (NPR1). Is a poor agonist of the atrial natriuretic peptide receptor 2 (NPR2). Is not degraded by neutral endopeptidase (NEP/MME). Binds to atrial natriuretic peptide clearance receptor (NPR-C/NPR3), which may be responsible of the removal of DNP from the circulation. Increases calcium uptake and induces histamine release from rat peritoneal mast cells. Increases calcium-activated potassium (KCa) current in gastric antral circular smooth muscle cells by increasing cGMP production and activating inositol trisphosphate receptors (IP3Rs). In vivo, reduces both systolic and diastolic blood pressure with no effect on heart rate, when intravenously injected in conscious rabbits. This is Natriuretic peptide DNP from Dendroaspis angusticeps (Eastern green mamba).